The primary structure comprises 572 residues: Phosphoenolpyruvate-protein phosphotransferase (572 aa).

His191 (tele-phosphohistidine intermediate) is an active-site residue. Phosphoenolpyruvate contacts are provided by Arg298 and Arg334. The Mg(2+) site is built by Glu433 and Asp457. Residues 456–457 (ND) and Arg467 each bind phosphoenolpyruvate. The active-site Proton donor is the Cys504.

Belongs to the PEP-utilizing enzyme family. As to quaternary structure, homodimer. Requires Mg(2+) as cofactor.

The protein resides in the cytoplasm. The enzyme catalyses L-histidyl-[protein] + phosphoenolpyruvate = N(pros)-phospho-L-histidyl-[protein] + pyruvate. General (non sugar-specific) component of the phosphoenolpyruvate-dependent sugar phosphotransferase system (sugar PTS). This major carbohydrate active-transport system catalyzes the phosphorylation of incoming sugar substrates concomitantly with their translocation across the cell membrane. Enzyme I transfers the phosphoryl group from phosphoenolpyruvate (PEP) to the phosphoryl carrier protein (HPr). This chain is Phosphoenolpyruvate-protein phosphotransferase (ptsI), found in Staphylococcus aureus (strain MRSA252).